A 322-amino-acid polypeptide reads, in one-letter code: Phosphatidylserine decarboxylase proenzyme (322 aa).

Catalysis depends on charge relay system; for autoendoproteolytic cleavage activity residues Asp90, His147, and Ser254. Ser254 serves as the catalytic Schiff-base intermediate with substrate; via pyruvic acid; for decarboxylase activity. Ser254 is modified (pyruvic acid (Ser); by autocatalysis).

It belongs to the phosphatidylserine decarboxylase family. PSD-B subfamily. Prokaryotic type I sub-subfamily. In terms of assembly, heterodimer of a large membrane-associated beta subunit and a small pyruvoyl-containing alpha subunit. Requires pyruvate as cofactor. Is synthesized initially as an inactive proenzyme. Formation of the active enzyme involves a self-maturation process in which the active site pyruvoyl group is generated from an internal serine residue via an autocatalytic post-translational modification. Two non-identical subunits are generated from the proenzyme in this reaction, and the pyruvate is formed at the N-terminus of the alpha chain, which is derived from the carboxyl end of the proenzyme. The autoendoproteolytic cleavage occurs by a canonical serine protease mechanism, in which the side chain hydroxyl group of the serine supplies its oxygen atom to form the C-terminus of the beta chain, while the remainder of the serine residue undergoes an oxidative deamination to produce ammonia and the pyruvoyl prosthetic group on the alpha chain. During this reaction, the Ser that is part of the protease active site of the proenzyme becomes the pyruvoyl prosthetic group, which constitutes an essential element of the active site of the mature decarboxylase.

It is found in the cell membrane. It carries out the reaction a 1,2-diacyl-sn-glycero-3-phospho-L-serine + H(+) = a 1,2-diacyl-sn-glycero-3-phosphoethanolamine + CO2. The protein operates within phospholipid metabolism; phosphatidylethanolamine biosynthesis; phosphatidylethanolamine from CDP-diacylglycerol: step 2/2. Its function is as follows. Catalyzes the formation of phosphatidylethanolamine (PtdEtn) from phosphatidylserine (PtdSer). The protein is Phosphatidylserine decarboxylase proenzyme of Shigella dysenteriae serotype 1 (strain Sd197).